Consider the following 223-residue polypeptide: Putative HTLV-1-related endogenous sequence (223 aa).

Residues 1-19 (MRCAHAPAPRTRYPTRAPS) are compositionally biased toward low complexity. A disordered region spans residues 1 to 184 (MRCAHAPAPR…ARAHGEAGAG (184 aa)). The span at 115–126 (GDRRREGPDRSP) shows a compositional bias: basic and acidic residues. The segment covering 133-157 (PAAAAQPDSSSAQAPGPSTLRPAAT) has biased composition (low complexity).

In Homo sapiens (Human), this protein is Putative HTLV-1-related endogenous sequence (HRES1).